A 438-amino-acid chain; its full sequence is MATKEYFPGIGKIKFEGKESKNPMAFRYYDAEKVINGKKMKDWLKFAMAWWHTLCAEGGDQFGGGTKKFPWNGDADKVQAAKNKMDAGFEFMQKMGIEYYCFHDVDLCEEADTIEEYEANLKEIVAYAKQKQAETGIKLLWGTANVFGHARYMNGAATNPEFDVVARAAVQIKNAIDATIELGGSNYVFWGGREGYMSLLNTDQKREKEHLAQMLTIARDYARSKGFTGTFLIEPKPMEPTKHQYDVDTETVVGFLKTHGLDKDFKVNIEVNHATLAGHTFEHELAVAVDNGMLGSIDANRGDYQNGWDTDQFPIDNYELTQAMMQIIRNGGLGNGGTNFDAKTRRNSTDLEDIFIAHIAGMDAMARALESAAALLNESPYCKMLSDRYASFDSGKGKEFEEGKLTLEDVVAYAKQNGEPKQVSGKQELYEAIVNMYC.

Catalysis depends on residues histidine 103 and aspartate 106. Residues glutamate 234, glutamate 270, histidine 273, aspartate 298, aspartate 309, aspartate 311, and aspartate 341 each coordinate Mg(2+).

Belongs to the xylose isomerase family. In terms of assembly, homotetramer. The cofactor is Mg(2+).

The protein localises to the cytoplasm. The catalysed reaction is alpha-D-xylose = alpha-D-xylulofuranose. This is Xylose isomerase from Phocaeicola vulgatus (strain ATCC 8482 / DSM 1447 / JCM 5826 / CCUG 4940 / NBRC 14291 / NCTC 11154) (Bacteroides vulgatus).